Consider the following 156-residue polypeptide: Transcription elongation factor GreA (156 aa).

Residues 7–27 (MTQEGLDKLKLELENLKLVKR) adopt a coiled-coil conformation.

It belongs to the GreA/GreB family.

Its function is as follows. Necessary for efficient RNA polymerase transcription elongation past template-encoded arresting sites. The arresting sites in DNA have the property of trapping a certain fraction of elongating RNA polymerases that pass through, resulting in locked ternary complexes. Cleavage of the nascent transcript by cleavage factors such as GreA or GreB allows the resumption of elongation from the new 3'terminus. GreA releases sequences of 2 to 3 nucleotides. This is Transcription elongation factor GreA from Lactococcus lactis subsp. lactis (strain IL1403) (Streptococcus lactis).